The following is a 91-amino-acid chain: Anthranilate synthase component 2 (91 aa).

The 88-residue stretch at 4 to 91 (NILIIDNYDS…CLGHQAIGEA (88 aa)) folds into the Glutamine amidotransferase type-1 domain. 55–57 (GPG) contacts L-glutamine. Residue C82 is the Nucleophile; for GATase activity of the active site. Q86 is an L-glutamine binding site.

As to quaternary structure, heterotetramer consisting of two non-identical subunits: a beta subunit (TrpG) and a large alpha subunit (TrpE).

The enzyme catalyses chorismate + L-glutamine = anthranilate + pyruvate + L-glutamate + H(+). It participates in amino-acid biosynthesis; L-tryptophan biosynthesis; L-tryptophan from chorismate: step 1/5. Its function is as follows. Part of a heterotetrameric complex that catalyzes the two-step biosynthesis of anthranilate, an intermediate in the biosynthesis of L-tryptophan. In the first step, the glutamine-binding beta subunit (TrpG) of anthranilate synthase (AS) provides the glutamine amidotransferase activity which generates ammonia as a substrate that, along with chorismate, is used in the second step, catalyzed by the large alpha subunit of AS (TrpE) to produce anthranilate. In the absence of TrpG, TrpE can synthesize anthranilate directly from chorismate and high concentrations of ammonia. The sequence is that of Anthranilate synthase component 2 (trpG) from Acetivibrio thermocellus (Hungateiclostridium thermocellum).